The chain runs to 125 residues: uncharacterized protein (125 aa).

It is found in the plastid. This is an uncharacterized protein from Euglena longa (Euglenophycean alga).